We begin with the raw amino-acid sequence, 668 residues long: Bifunctional polymyxin resistance protein ArnA (668 aa).

The segment at 1–307 (MSNKAVVFAY…ELGLVDGSLL (307 aa)) is formyltransferase ArnAFT. Histidine 106 serves as the catalytic Proton donor; for formyltransferase activity. (6R)-10-formyltetrahydrofolate is bound by residues arginine 116 and 138-142 (VKRAD). The dehydrogenase ArnADH stretch occupies residues 317-668 (RRTRVLILGV…IADRAKQEAR (352 aa)). NAD(+) contacts are provided by residues aspartate 350 and 371 to 372 (DI). UDP-alpha-D-glucuronate contacts are provided by residues alanine 396, tyrosine 401, and 435–436 (TS). Glutamate 437 functions as the Proton acceptor; for decarboxylase activity in the catalytic mechanism. UDP-alpha-D-glucuronate-binding positions include arginine 463, asparagine 494, 528 to 537 (RLFDGGEQKR), and tyrosine 615. Residue arginine 621 is the Proton donor; for decarboxylase activity of the active site.

This sequence in the N-terminal section; belongs to the Fmt family. UDP-L-Ara4N formyltransferase subfamily. In the C-terminal section; belongs to the NAD(P)-dependent epimerase/dehydratase family. UDP-glucuronic acid decarboxylase subfamily. In terms of assembly, homohexamer, formed by a dimer of trimers.

The catalysed reaction is UDP-alpha-D-glucuronate + NAD(+) = UDP-beta-L-threo-pentopyranos-4-ulose + CO2 + NADH. The enzyme catalyses UDP-4-amino-4-deoxy-beta-L-arabinose + (6R)-10-formyltetrahydrofolate = UDP-4-deoxy-4-formamido-beta-L-arabinose + (6S)-5,6,7,8-tetrahydrofolate + H(+). The protein operates within nucleotide-sugar biosynthesis; UDP-4-deoxy-4-formamido-beta-L-arabinose biosynthesis; UDP-4-deoxy-4-formamido-beta-L-arabinose from UDP-alpha-D-glucuronate: step 1/3. It participates in nucleotide-sugar biosynthesis; UDP-4-deoxy-4-formamido-beta-L-arabinose biosynthesis; UDP-4-deoxy-4-formamido-beta-L-arabinose from UDP-alpha-D-glucuronate: step 3/3. It functions in the pathway bacterial outer membrane biogenesis; lipopolysaccharide biosynthesis. Bifunctional enzyme that catalyzes the oxidative decarboxylation of UDP-glucuronic acid (UDP-GlcUA) to UDP-4-keto-arabinose (UDP-Ara4O) and the addition of a formyl group to UDP-4-amino-4-deoxy-L-arabinose (UDP-L-Ara4N) to form UDP-L-4-formamido-arabinose (UDP-L-Ara4FN). The modified arabinose is attached to lipid A and is required for resistance to polymyxin and cationic antimicrobial peptides. This chain is Bifunctional polymyxin resistance protein ArnA, found in Pseudomonas fluorescens (strain ATCC BAA-477 / NRRL B-23932 / Pf-5).